We begin with the raw amino-acid sequence, 350 residues long: Solute carrier family 35 member E4 (350 aa).

The span at 19-30 shows a compositional bias: low complexity; that stretch reads GAAAGGAQAAGP. Residues 19-42 form a disordered region; it reads GAAAGGAQAAGPPEWPPGSPQALR. 8 helical membrane passes run 51–71, 73–93, 110–132, 135–155, 218–238, 258–278, 279–299, and 312–332; these read MAALVWLLAGASMSSLNKWIF, VHGFGRPLLLSALHMLVAALA, VLLLSLTFGTSMACGNVGLRAVP, LAQLVTTTTPLFTLALSALLL, VTLLYATSLPSFCLLAGAALV, ILLSCLLSVLYNLASFSLLAL, TSALTVHVLGNLTVVGNLILS, and YVGIALTLSGMFLYHNCEFVA. The EamA domain occupies 125 to 179; the sequence is NVGLRAVPLDLAQLVTTTTPLFTLALSALLLGRRHHPLQLAAMGPLCLGAACSLA.

Belongs to the TPT transporter family. SLC35E subfamily.

It is found in the membrane. In terms of biological role, putative transporter. In Homo sapiens (Human), this protein is Solute carrier family 35 member E4 (SLC35E4).